The chain runs to 320 residues: MTNSSSQLAQLKQMTTVVADTGDIEAIAKFQPQDATTNPSLLLKAASLPNYQGLVKDSVAWAKTQSDNAEQQVIDAADKISVLIGLEILKIVPGRISTEVDARLSFDTSASITKAHKLIAMYNEAGISNDRILIKLASTWEGIKAAEQLEQEGINCNLTLLFSFAQARACAEAGAYLISPFVGRILDWYKKDTGRNDYASNEDPGVVSVTSIFNYYKLQGFNTVVMGASFRNIGEILELAGCDRLTISPQLMEELANSTDTVIQKLTACEATAEKEAALSQAEFRWQMNEDPMATEKLAEGIRNFTIDQVKLEKQLTDLL.

Lysine 135 (schiff-base intermediate with substrate) is an active-site residue.

Belongs to the transaldolase family. Type 1 subfamily. As to quaternary structure, homodimer.

It localises to the cytoplasm. The catalysed reaction is D-sedoheptulose 7-phosphate + D-glyceraldehyde 3-phosphate = D-erythrose 4-phosphate + beta-D-fructose 6-phosphate. The protein operates within carbohydrate degradation; pentose phosphate pathway; D-glyceraldehyde 3-phosphate and beta-D-fructose 6-phosphate from D-ribose 5-phosphate and D-xylulose 5-phosphate (non-oxidative stage): step 2/3. In terms of biological role, transaldolase is important for the balance of metabolites in the pentose-phosphate pathway. The sequence is that of Transaldolase from Colwellia psychrerythraea (strain 34H / ATCC BAA-681) (Vibrio psychroerythus).